We begin with the raw amino-acid sequence, 238 residues long: Sugar fermentation stimulation protein homolog (238 aa).

Belongs to the SfsA family.

This chain is Sugar fermentation stimulation protein homolog, found in Vibrio vulnificus (strain CMCP6).